The primary structure comprises 414 residues: Esterase FrsA (414 aa).

This sequence belongs to the FrsA family.

It catalyses the reaction a carboxylic ester + H2O = an alcohol + a carboxylate + H(+). In terms of biological role, catalyzes the hydrolysis of esters. In Shigella flexneri serotype 5b (strain 8401), this protein is Esterase FrsA.